Reading from the N-terminus, the 111-residue chain is uncharacterized protein (111 aa).

Positions 3-29 (RKITSYKTSLQGLREENEDVELMNLNL) form a coiled coil. Residues 6-111 (TSYKTSLQGL…TWWMYCSSYY (106 aa)) enclose the PPM-type phosphatase domain.

This is an uncharacterized protein from Acanthamoeba polyphaga mimivirus (APMV).